The following is a 145-amino-acid chain: Late embryogenesis abundant protein D-11 (145 aa).

The span at 1 to 18 (MAHFQNQYSAPEVTQTDA) shows a compositional bias: polar residues. Residues 1–136 (MAHFQNQYSA…EAPWSPQPLI (136 aa)) are disordered. Residues 47-57 (GHHHGGHHGLH) show a composition bias toward basic residues. A compositionally biased stretch (low complexity) spans 58–68 (RTGSSSSSSSS). Positions 82-96 (KERLKEKIPGNKEHQ) are enriched in basic and acidic residues. Residues 97 to 107 (SQATSTTTPGQ) show a composition bias toward polar residues.

This sequence belongs to the plant dehydrin family.

Its function is as follows. LEA protein are late embryogenesis abundant in higher plant seed embryos. There are two subsets of LEA proteins (5a, and 5b), the first ones are expressed when the cotyledon weight reach 80 mg and the second set are expressed above 100 mg. The function of those proteins is not known. The polypeptide is Late embryogenesis abundant protein D-11 (Gossypium hirsutum (Upland cotton)).